The following is a 1331-amino-acid chain: Lysine-specific demethylase 3A-A (1331 aa).

Disordered regions lie at residues 243 to 280 (LNDKSRKPRAPKRKSQDTESEDQTELKQTRNEEVPSKD), 358 to 381 (TPPQANSPPSFGAATPQGKGTQNL), and 497 to 532 (KVVKKPENNHTSVRAIKPQEPPYPKSPNKNDGVTYP). Basic and acidic residues predominate over residues 266 to 280 (TELKQTRNEEVPSKD). A C6-type zinc finger spans residues 683–708 (CDACDTTIFNLHWVCPKCGFGVCVDC). Positions 894-898 (LRNLL) match the LXXLL motif motif. The 206-residue stretch at 1086–1291 (RREGKLNLAA…HCFWLTQEFR (206 aa)) folds into the JmjC domain. 3 residues coordinate Fe cation: His1130, Asp1132, and His1259.

This sequence belongs to the JHDM2 histone demethylase family. It depends on Fe(2+) as a cofactor.

The protein resides in the cytoplasm. Its subcellular location is the nucleus. It carries out the reaction N(6),N(6)-dimethyl-L-lysyl(9)-[histone H3] + 2 2-oxoglutarate + 2 O2 = L-lysyl(9)-[histone H3] + 2 formaldehyde + 2 succinate + 2 CO2. In terms of biological role, histone demethylase that specifically demethylates 'Lys-9' of histone H3, thereby playing a central role in histone code. Preferentially demethylates mono- and dimethylated H3 'Lys-9' residue, with a preference for dimethylated residue, while it has weak or no activity on trimethylated H3 'Lys-9'. Demethylation of Lys residue generates formaldehyde and succinate. This Xenopus laevis (African clawed frog) protein is Lysine-specific demethylase 3A-A (kdm3a-a).